Consider the following 92-residue polypeptide: Alpha-elapitoxin-Lh2a (92 aa).

A signal peptide spans 1-21 (MKTLLLTLVVVTIVCLDLGDS). 5 cysteine pairs are disulfide-bonded: cysteine 24-cysteine 41, cysteine 34-cysteine 62, cysteine 47-cysteine 51, cysteine 66-cysteine 77, and cysteine 78-cysteine 83.

This sequence belongs to the three-finger toxin family. Long-chain subfamily. Type II alpha-neurotoxin sub-subfamily. As to expression, expressed by the venom gland.

It is found in the secreted. Its function is as follows. Binds with high affinity to muscular (alpha-1/CHRNA1) and neuronal (alpha-7/CHRNA7) nicotinic acetylcholine receptor (nAChR) and inhibits acetylcholine from binding to the receptor, thereby impairing neuromuscular and neuronal transmission. The chain is Alpha-elapitoxin-Lh2a from Hydrophis hardwickii (Hardwick's spine-bellied seasnake).